Here is a 480-residue protein sequence, read N- to C-terminus: Krueppel-like factor 10 (480 aa).

Positions 1–12 are enriched in polar residues; that stretch reads MLNFGASLQQAS. Disordered regions lie at residues 1-32, 64-83, and 97-146; these read MLNFGASLQQASEGKMELISEKSKEGAHPWDK, VTPVSDTSEEDSLLPGTPDL, and PSDF…APPL. The segment covering 14–32 has biased composition (basic and acidic residues); sequence GKMELISEKSKEGAHPWDK. S183 is subject to Phosphoserine. The segment at 202–222 is disordered; the sequence is AAVSPNRPKPEPSTAANGAEK. Residue S249 is modified to Phosphoserine. 3 C2H2-type zinc fingers span residues 369-393, 399-423, and 429-451; these read HICSHPGCGKTYFKSSHLKAHVRTH, FSCSWKGCERRFARSDELSRHRRTH, and FACPMCDRRFMRSDHLTKHARRH.

It belongs to the Sp1 C2H2-type zinc-finger protein family. Post-translationally, ubiquitinated; mediated by SIAH1 and leading to its subsequent proteasomal degradation.

The protein resides in the nucleus. Transcriptional repressor which binds to the consensus sequence 5'-GGTGTG-3'. Regulates the circadian expression of genes involved in lipogenesis, gluconeogenesis, and glycolysis in the liver. Represses the expression of PCK2, a rate-limiting step enzyme of gluconeogenesis. May play a role in the cell cycle regulation. Plays a role in the regulation of the circadian clock; binds to the GC box sequence in the promoter of the core clock component ARTNL/BMAL1 and represses its transcriptional activity. This is Krueppel-like factor 10 (Klf10) from Rattus norvegicus (Rat).